Here is a 780-residue protein sequence, read N- to C-terminus: ATP-dependent 6-phosphofructokinase, muscle type (780 aa).

At Thr-2 the chain carries N-acetylthreonine. The tract at residues 2 to 390 is N-terminal catalytic PFK domain 1; it reads THEEHHAAKT…NWEVYKLLAH (389 aa). Residues Gly-25, 88 to 89, and 118 to 121 contribute to the ATP site; these read RC and GDGS. Mg(2+) is bound at residue Asp-119. Position 133 is a phosphoserine (Ser-133). Substrate is bound by residues 164 to 166, Arg-201, 208 to 210, Glu-264, Arg-292, and 298 to 301; these read SID, MGR, and HVQR. The Proton acceptor role is filled by Asp-166. A Phosphoserine modification is found at Ser-377. The interval 391 to 401 is interdomain linker; that stretch reads VRPPVSKGGLH. A C-terminal regulatory PFK domain 2 region spans residues 402–780; that stretch reads TVAVMNVGAP…SRKRSGEAAV (379 aa). Beta-D-fructose 2,6-bisphosphate contacts are provided by residues Arg-471 and 528–532; that span reads TVSNN. O-linked (GlcNAc) serine glycosylation occurs at Ser-530. Lys-557 bears the N6-(2-hydroxyisobutyryl)lysine mark. Residues Arg-566, 573–575, Glu-629, Arg-655, and 661–664 contribute to the beta-D-fructose 2,6-bisphosphate site; these read MGG and HMQQ. A Phosphoserine modification is found at Ser-667. Arg-735 provides a ligand contact to beta-D-fructose 2,6-bisphosphate. Residue Ser-775 is modified to Phosphoserine.

This sequence belongs to the phosphofructokinase type A (PFKA) family. ATP-dependent PFK group I subfamily. Eukaryotic two domain clade 'E' sub-subfamily. In terms of assembly, homo- and heterotetramers. Phosphofructokinase (PFK) enzyme functions as a tetramer composed of different combinations of 3 types of subunits, called PFKM (M), PFKL (L) and PFKP (P). The composition of the PFK tetramer differs according to the tissue type it is present in. The kinetic and regulatory properties of the tetrameric enzyme are dependent on the subunit composition, hence can vary across tissues. Isoform 2 and isoform 3 interact (via N-terminal testis-specific region) with GSTM5. Isoform 2 and isoform 3 interact (via C-terminus) with HK1 (via N-terminal spermatogenic cell-specific region). Mg(2+) serves as cofactor. Post-translationally, glcNAcylation decreases enzyme activity. In terms of tissue distribution, isoform 1 is expressed in skeletal muscle (at protein level). Isoform 2 and isoform 3 are testis-specific and are detected in quiescent sperm (at protein level). They are first detected in the cytoplasm of round spermatids and subsequently in the flagellum of elongated spermatids extending into the seminiferous tubule lumen (at protein level). Isoform 2 is expressed at higher level than isoform 3 in testis.

Its subcellular location is the cytoplasm. It localises to the cell projection. It is found in the cilium. The protein localises to the flagellum. It carries out the reaction beta-D-fructose 6-phosphate + ATP = beta-D-fructose 1,6-bisphosphate + ADP + H(+). It participates in carbohydrate degradation; glycolysis; D-glyceraldehyde 3-phosphate and glycerone phosphate from D-glucose: step 3/4. Allosterically activated by ADP, AMP, or fructose 2,6-bisphosphate, and allosterically inhibited by ATP or citrate. In terms of biological role, catalyzes the phosphorylation of D-fructose 6-phosphate to fructose 1,6-bisphosphate by ATP, the first committing step of glycolysis. This is ATP-dependent 6-phosphofructokinase, muscle type (Pfkm) from Mus musculus (Mouse).